A 484-amino-acid polypeptide reads, in one-letter code: Protein nucleotidyltransferase YdiU (484 aa).

ATP contacts are provided by glycine 81, glycine 83, arginine 84, lysine 103, aspartate 115, glycine 116, arginine 166, and arginine 173. Aspartate 244 functions as the Proton acceptor in the catalytic mechanism. Residues asparagine 245 and aspartate 254 each contribute to the Mg(2+) site. ATP is bound at residue aspartate 254.

The protein belongs to the SELO family. The cofactor is Mg(2+). It depends on Mn(2+) as a cofactor.

It catalyses the reaction L-seryl-[protein] + ATP = 3-O-(5'-adenylyl)-L-seryl-[protein] + diphosphate. The catalysed reaction is L-threonyl-[protein] + ATP = 3-O-(5'-adenylyl)-L-threonyl-[protein] + diphosphate. The enzyme catalyses L-tyrosyl-[protein] + ATP = O-(5'-adenylyl)-L-tyrosyl-[protein] + diphosphate. It carries out the reaction L-histidyl-[protein] + UTP = N(tele)-(5'-uridylyl)-L-histidyl-[protein] + diphosphate. It catalyses the reaction L-seryl-[protein] + UTP = O-(5'-uridylyl)-L-seryl-[protein] + diphosphate. The catalysed reaction is L-tyrosyl-[protein] + UTP = O-(5'-uridylyl)-L-tyrosyl-[protein] + diphosphate. Functionally, nucleotidyltransferase involved in the post-translational modification of proteins. It can catalyze the addition of adenosine monophosphate (AMP) or uridine monophosphate (UMP) to a protein, resulting in modifications known as AMPylation and UMPylation. The chain is Protein nucleotidyltransferase YdiU from Shewanella baltica (strain OS223).